Consider the following 430-residue polypeptide: Serine--tRNA ligase (430 aa).

L-serine is bound at residue Thr237 to Glu239. Arg268–Glu270 lines the ATP pocket. Position 291 (Glu291) interacts with L-serine. Glu355–Ser358 contributes to the ATP binding site. Ser391 contributes to the L-serine binding site.

Belongs to the class-II aminoacyl-tRNA synthetase family. Type-1 seryl-tRNA synthetase subfamily. Homodimer. The tRNA molecule binds across the dimer.

It localises to the cytoplasm. The enzyme catalyses tRNA(Ser) + L-serine + ATP = L-seryl-tRNA(Ser) + AMP + diphosphate + H(+). It carries out the reaction tRNA(Sec) + L-serine + ATP = L-seryl-tRNA(Sec) + AMP + diphosphate + H(+). It functions in the pathway aminoacyl-tRNA biosynthesis; selenocysteinyl-tRNA(Sec) biosynthesis; L-seryl-tRNA(Sec) from L-serine and tRNA(Sec): step 1/1. Its function is as follows. Catalyzes the attachment of serine to tRNA(Ser). Is also able to aminoacylate tRNA(Sec) with serine, to form the misacylated tRNA L-seryl-tRNA(Sec), which will be further converted into selenocysteinyl-tRNA(Sec). The polypeptide is Serine--tRNA ligase (Baumannia cicadellinicola subsp. Homalodisca coagulata).